A 253-amino-acid chain; its full sequence is Imidazole glycerol phosphate synthase subunit HisF (253 aa).

Active-site residues include Asp-11 and Asp-130.

The protein belongs to the HisA/HisF family. Heterodimer of HisH and HisF.

The protein resides in the cytoplasm. The catalysed reaction is 5-[(5-phospho-1-deoxy-D-ribulos-1-ylimino)methylamino]-1-(5-phospho-beta-D-ribosyl)imidazole-4-carboxamide + L-glutamine = D-erythro-1-(imidazol-4-yl)glycerol 3-phosphate + 5-amino-1-(5-phospho-beta-D-ribosyl)imidazole-4-carboxamide + L-glutamate + H(+). Its pathway is amino-acid biosynthesis; L-histidine biosynthesis; L-histidine from 5-phospho-alpha-D-ribose 1-diphosphate: step 5/9. Functionally, IGPS catalyzes the conversion of PRFAR and glutamine to IGP, AICAR and glutamate. The HisF subunit catalyzes the cyclization activity that produces IGP and AICAR from PRFAR using the ammonia provided by the HisH subunit. The chain is Imidazole glycerol phosphate synthase subunit HisF from Myxococcus xanthus (strain DK1622).